Reading from the N-terminus, the 206-residue chain is MDEFVSLVIGYFLGNILFAMIVTKIFLHKDPTKYGSGNPGTANVGAVFGKKWGILTCIGDLAKTLAALLIVYFIYHGNRLDLSFAGLGVVLGHSFPFWNHFKGGKGVAVTALWIVFFDWRAGLIALLIGLFLVIIMKNLTIPPLVYMLGFSIFTWINFGWEQGLIFLIATLIMIFQFRKDIVDFFTGKGKRVDVLVTIKKKLGIYK.

5 helical membrane passes run 7–27 (LVIGYFLGNILFAMIVTKIFL), 54–74 (ILTCIGDLAKTLAALLIVYFI), 81–101 (DLSFAGLGVVLGHSFPFWNHF), 114–134 (IVFFDWRAGLIALLIGLFLVI), and 155–175 (WINFGWEQGLIFLIATLIMIF).

It belongs to the PlsY family. Probably interacts with PlsX.

It localises to the cell membrane. It carries out the reaction an acyl phosphate + sn-glycerol 3-phosphate = a 1-acyl-sn-glycero-3-phosphate + phosphate. Its pathway is lipid metabolism; phospholipid metabolism. Its function is as follows. Catalyzes the transfer of an acyl group from acyl-phosphate (acyl-PO(4)) to glycerol-3-phosphate (G3P) to form lysophosphatidic acid (LPA). This enzyme utilizes acyl-phosphate as fatty acyl donor, but not acyl-CoA or acyl-ACP. The polypeptide is Glycerol-3-phosphate acyltransferase 1 (Lactobacillus johnsonii (strain CNCM I-12250 / La1 / NCC 533)).